The primary structure comprises 505 residues: ATP synthase subunit alpha, chloroplastic (505 aa).

170–177 (GDRQTGKT) provides a ligand contact to ATP.

Belongs to the ATPase alpha/beta chains family. As to quaternary structure, F-type ATPases have 2 components, CF(1) - the catalytic core - and CF(0) - the membrane proton channel. CF(1) has five subunits: alpha(3), beta(3), gamma(1), delta(1), epsilon(1). CF(0) has four main subunits: a, b, b' and c.

It is found in the plastid. It localises to the chloroplast thylakoid membrane. It catalyses the reaction ATP + H2O + 4 H(+)(in) = ADP + phosphate + 5 H(+)(out). Produces ATP from ADP in the presence of a proton gradient across the membrane. The alpha chain is a regulatory subunit. This Oenothera biennis (German evening primrose) protein is ATP synthase subunit alpha, chloroplastic.